We begin with the raw amino-acid sequence, 895 residues long: Putative endoplasmic reticulum metallopeptidase 1-B (895 aa).

Positions 1 to 27 (MSTGIRRRHADEKKNILEKESLQNDET) are disordered. The Cytoplasmic portion of the chain corresponds to 1-39 (MSTGIRRRHADEKKNILEKESLQNDETQREMEKDISLLR). The segment covering 9-27 (HADEKKNILEKESLQNDET) has biased composition (basic and acidic residues). A helical membrane pass occupies residues 40-60 (PAHWNFIGLFFLVLIIGTTFL). Over 61–374 (HKCLPEPKDP…KPAEYADRKT (314 aa)) the chain is Lumenal. Asn156 is a glycosylation site (N-linked (GlcNAc...) asparagine). Zn(2+) contacts are provided by His180 and Asp192. The active-site Proton acceptor is Glu226. Zn(2+) contacts are provided by Glu227, Glu253, and His329. A helical transmembrane segment spans residues 375–395 (VFFDFLGLFVIIYPLSIAHLV). At 396-424 (NMLTICTVIALMSHRFYSKTFITFLALRD) the chain is on the cytoplasmic side. A helical membrane pass occupies residues 425-445 (YVLTILTIALVLKAMTFMSLF). Over 446–457 (TYGALRWYTRHW) the chain is Lumenal. The helical transmembrane segment at 458 to 478 (LALVAYGLPSVWAGISVQGLL) threads the bilayer. Over 479 to 489 (TARLAPKAREE) the chain is Cytoplasmic. A helical membrane pass occupies residues 490-512 (YGSTLELIHLTLISGILLAFTYY). Over 513-515 (DIA) the chain is Lumenal. Residues 516–538 (SGFLFALLLVPAIKSIITYFGAW) traverse the membrane as a helical segment. The Cytoplasmic segment spans residues 539–553 (PTCPTFNTILTLILS). The chain crosses the membrane as a helical span at residues 554 to 574 (FPGCAMAIYTTEMLLSIFIPI). At 575 to 584 (MGRSSYNPEP) the chain is on the lumenal side. The chain crosses the membrane as a helical span at residues 585 to 605 (AVSFFVAFSAGCIVLSLGGLV). Topologically, residues 606–619 (AKSRNSRSSNEAGL) are cytoplasmic. A helical membrane pass occupies residues 620-640 (LELIYNILGVLLVTLTILYVF). The Lumenal segment spans residues 641-895 (SSFWPSPYRF…WNVDQVYKYF (255 aa)). 2 N-linked (GlcNAc...) asparagine glycosylation sites follow: Asn679 and Asn796.

The protein belongs to the peptidase M28 family. Zn(2+) is required as a cofactor.

The protein localises to the endoplasmic reticulum membrane. This chain is Putative endoplasmic reticulum metallopeptidase 1-B, found in Caenorhabditis elegans.